Reading from the N-terminus, the 232-residue chain is Orotate phosphoribosyltransferase (232 aa).

K28 contacts 5-phospho-alpha-D-ribose 1-diphosphate. 36–37 contributes to the orotate binding site; sequence FF. Residues 78 to 79, R108, K109, K112, H114, and 134 to 142 contribute to the 5-phospho-alpha-D-ribose 1-diphosphate site; these read YK and DDVITAGTA. Residues T138 and R166 each coordinate orotate.

It belongs to the purine/pyrimidine phosphoribosyltransferase family. PyrE subfamily. Homodimer.

It catalyses the reaction orotidine 5'-phosphate + diphosphate = orotate + 5-phospho-alpha-D-ribose 1-diphosphate. It functions in the pathway pyrimidine metabolism; UMP biosynthesis via de novo pathway; UMP from orotate: step 1/2. In terms of biological role, catalyzes the transfer of a ribosyl phosphate group from 5-phosphoribose 1-diphosphate to orotate, leading to the formation of orotidine monophosphate (OMP). The protein is Orotate phosphoribosyltransferase (URA5) of Sordaria macrospora.